The primary structure comprises 309 residues: Postacrosomal sheath WW domain-binding protein (309 aa).

In terms of domain architecture, GRAM spans 45–87; it reads GRKTGTLFLTSYRVIFITSCSISDPMLSFMMPFDLMTNLTVEQ. 10 tandem repeats follow at residues 175-181, 182-188, 189-195, 217-223, 224-230, 231-237, 238-244, 245-251, 252-258, and 259-265. The 10 X 7 AA tandem repeat of Y-G-X-P-P-X-G stretch occupies residues 175–265; that stretch reads YGAPPAGYGA…PLGYGAPPAG (91 aa). The short motif at 186–189 is the PPxY motif element; it reads PPGY. The span at 251 to 272 shows a compositional bias: low complexity; sequence GYGAPPLGYGAPPAGNEGPPAG. The segment at 251–309 is disordered; the sequence is GYGAPPLGYGAPPAGNEGPPAGYRASPAGSGARPQESTAAQAPENEASLPSASSSQVHS. Polar residues predominate over residues 298–309; the sequence is SLPSASSSQVHS.

As to expression, expressed in testis.

Its function is as follows. May play a role in meiotic resumption and pronuclear formation, mediated by a WW domain-signaling pathway during fertilization. The polypeptide is Postacrosomal sheath WW domain-binding protein (WBP2NL) (Homo sapiens (Human)).